Here is a 206-residue protein sequence, read N- to C-terminus: Small ribosomal subunit protein uS4 (206 aa).

Positions 96 to 157 (CRLDNVVYRM…KCRNQLRIAQ (62 aa)) constitute an S4 RNA-binding domain.

The protein belongs to the universal ribosomal protein uS4 family. In terms of assembly, part of the 30S ribosomal subunit. Contacts protein S5. The interaction surface between S4 and S5 is involved in control of translational fidelity.

Its function is as follows. One of the primary rRNA binding proteins, it binds directly to 16S rRNA where it nucleates assembly of the body of the 30S subunit. In terms of biological role, with S5 and S12 plays an important role in translational accuracy. This chain is Small ribosomal subunit protein uS4, found in Stutzerimonas stutzeri (strain A1501) (Pseudomonas stutzeri).